A 1555-amino-acid chain; its full sequence is Regulating synaptic membrane exocytosis protein 2 (1555 aa).

A disordered region spans residues methionine 1–glutamate 35. Over residues arginine 10–glutamate 25 the composition is skewed to pro residues. Residues methionine 26–serine 154 form the RabBD domain. The FYVE-type zinc-finger motif lies at lysine 86–glutamate 142. Positions 92, 95, 108, 111, 116, 119, 134, and 137 each coordinate Zn(2+). Polar residues predominate over residues serine 154–aspartate 163. The tract at residues serine 154–aspartate 530 is disordered. Positions leucine 170–glutamate 185 are enriched in basic and acidic residues. Over residues tyrosine 259–arginine 268 the composition is skewed to polar residues. Composition is skewed to basic and acidic residues over residues glutamate 287–arginine 298, arginine 317–serine 335, glutamate 351–aspartate 370, and glutamate 379–alanine 403. At serine 369 the chain carries Phosphoserine. Polar residues predominate over residues alanine 418–serine 432. The span at aspartate 444–aspartate 461 shows a compositional bias: basic and acidic residues. Residues arginine 479 to serine 490 are compositionally biased toward polar residues. Over residues arginine 497 to lysine 506 the composition is skewed to basic residues. In terms of domain architecture, PDZ spans aspartate 590–arginine 676. Residue threonine 611 is modified to Phosphothreonine. Positions proline 682–serine 716 are disordered. Phosphoserine is present on residues serine 713 and serine 716. A C2 1 domain is found at phenylalanine 743–tyrosine 866. 5 disordered regions span residues proline 877–tyrosine 913, serine 935–serine 1145, tyrosine 1180–alanine 1207, leucine 1268–lysine 1288, and lysine 1307–threonine 1332. Over residues serine 935–glycine 953 the composition is skewed to polar residues. 2 stretches are compositionally biased toward basic and acidic residues: residues arginine 996–histidine 1014 and glutamine 1025–aspartate 1071. Positions alanine 1092 to glycine 1114 are enriched in low complexity. Serine 1106 bears the Phosphoserine mark. Basic and acidic residues-rich tracts occupy residues threonine 1128 to arginine 1141 and tyrosine 1180 to alanine 1190. Phosphoserine occurs at positions 1200 and 1276. A C2 2 domain is found at alanine 1401–phenylalanine 1519. 2 positions are modified to phosphoserine: serine 1540 and serine 1543.

As to quaternary structure, heterodimer with PCLO. Part of a ternary complex involving PCLO and EPAC2. Interacts with RAB3C, RAB3D and RAB26. Binds RAB3A and RAB3B that have been activated by GTP-binding. Interacts with TSPOAP1 and RIMBP2. Interacts with PPFIA3 and PPFIA4. Interacts via its zinc finger with the first C2 domain of UNC13A. Forms a complex consisting of UNC13A, RIMS2 and RAB3A. Highly expressed in hippocampus, brain cortex, cerebellum and olfactory bulb. Detected at intermediate levels in midbrain, hindbrain and spinal cord, and at low levels in testis.

It is found in the cell membrane. The protein localises to the synapse. Its subcellular location is the presynaptic cell membrane. In terms of biological role, rab effector involved in exocytosis. May act as scaffold protein. Plays a role in dendrite formation by melanocytes. The protein is Regulating synaptic membrane exocytosis protein 2 (Rims2) of Rattus norvegicus (Rat).